The chain runs to 1663 residues: Cortactin-binding protein 2 (1663 aa).

Disordered regions lie at residues 1 to 23, 203 to 222, 367 to 440, 454 to 478, and 498 to 614; these read MATD…AGAA, KKKT…RSTE, GASV…LHPG, GNAN…SPTS, and RFTS…LPPK. Residues 119 to 276 are a coiled coil; it reads KKMQERMSAQ…EQLKKGSDSK (158 aa). Residues 386–396 show a composition bias toward low complexity; it reads PSTGSTSDPTS. The residue at position 498 (R498) is an Asymmetric dimethylarginine. A compositionally biased stretch (polar residues) spans 583–593; that stretch reads TVASTPSSLPQ. ANK repeat units follow at residues 709–739, 743–772, 776–805, 809–838, 842–871, and 912–942; these read GRPT…DINY, DGHS…QVNA, NGFT…NINH, GGQT…NRSV, DGWT…PAHG, and EGWT…EPER. The tract at residues 1448–1483 is disordered; the sequence is KKGESGAWRKVNTSPRRKSGRFSLPTWNKPDLSTEG. S1524 is modified (phosphoserine). The disordered stretch occupies residues 1560–1663; the sequence is DSSGNNPVLS…KNGHLEKPNK (104 aa). 2 stretches are compositionally biased toward polar residues: residues 1561 to 1574 and 1582 to 1599; these read SSGN…TINN and KEVS…SNSK. A compositionally biased stretch (low complexity) spans 1624–1638; that stretch reads SQNTKRSSSSSNTRQ. Residues 1645-1663 are compositionally biased toward basic and acidic residues; that stretch reads SKEENWNLHKNGHLEKPNK.

As to quaternary structure, interacts with CTTN/cortactin SH3 domain. Interacts with STRN, STRN4/zinedin and MOB4/phocein; this interactions mediate the association with the STRIPAK core complex and may regulate dendritic spine distribution of the STRIPAK complex in hippocampal neurons. Activation of glutamate receptors weakens the interaction with STRN and STRN4.

The protein localises to the cytoplasm. It is found in the cell cortex. The protein resides in the cell projection. It localises to the dendritic spine. Regulates the dendritic spine distribution of CTTN/cortactin in hippocampal neurons, and thus controls dendritic spinogenesis and dendritic spine maintenance. Associates with the striatin-interacting phosphatase and kinase (STRIPAK) core complex to regulate dendritic spine distribution of the STRIPAK complex in hippocampal neurons. In Gorilla gorilla gorilla (Western lowland gorilla), this protein is Cortactin-binding protein 2 (CTTNBP2).